A 593-amino-acid chain; its full sequence is MTAEDSTAAMSSDSAAGSSAKVPEGVAGAPNEAALLALMERTGYSMVQENGQRKYGGPPPGWEGPHPQRGCEVFVGKIPRDVYEDELVPVFEAVGRIYELRLMMDFDGKNRGYAFVMYCHKHEAKRAVRELNNYEIRPGRLLGVCCSVDNCRLFIGGIPKMKKREEILEEIAKVTEGVLDVIVYASAADKMKNRGFAFVEYESHRAAAMARRKLMPGRIQLWGHQIAVDWAEPEIDVDEDVMETVKILYVRNLMIETTEDTIKKSFGQFNPGCVERVKKIRDYAFVHFTSREDAVHAMNNLNGTELEGSCLEVTLAKPVDKEQYSRYQKAARGGGAAEAAQQPSYVYSCDPYTLAYYGYPYNALIGPNRDYFVKAGSIRGRGRGAAGNRAPGPRGSYLGGYSAGRGIYSRYHEGKGKQQEKGYELVPNLEIPTVNPVAIKPGTVAIPAIGAQYSMFPAAPAPKMIEDGKIHTVEHMISPIAVQPDPASAAAAAAAAAAAAAAVIPTVSTPPPFQGRPITPVYTVAPNVQRIPTAGIYGASYVPFAAPATATIATLQKNAAAAAAMYGGYAGYIPQAFPAAAIQVPIPDVYQTY.

The segment covering Met-1–Ala-20 has biased composition (low complexity). The tract at residues Met-1–Gly-25 is disordered. 3 RRM domains span residues Cys-71–Asp-149, Cys-151–Pro-233, and Lys-246–Pro-318. The residue at position 332 (Arg-332) is an Omega-N-methylarginine. Asymmetric dimethylarginine; alternate is present on residues Arg-394 and Arg-405. Omega-N-methylarginine; alternate is present on residues Arg-394 and Arg-405.

This sequence belongs to the RRM RBM47 family. As to quaternary structure, homodimer. Interacts with A1CF. Interacts with APOBEC1; form an mRNA editing complex. Interacts with RBPMS.

The protein localises to the nucleus. It is found in the cytoplasm. Single-stranded RNA-binding protein that functions in a variety of RNA processes, including alternative splicing, RNA stabilization, and RNA editing. Functions as an enzyme-substrate adapter for the cytidine deaminase APOBEC1. With APOBEC1 forms an mRNA editing complex involved into cytidine to uridine editing of a variety of mRNA molecules. Through the binding of their 3'UTR, also stabilizes a variety of mRNAs and regulates the expression of genes such as the interferon alpha/beta receptor and interleukin-10. Also involved in the alternative splicing of several genes including TJP1. Binds the pre-mRNA (U)GCAUG consensus sequences in downstream intronic regions of alternative exons, regulating their exclusion and inclusion into mRNAs. Independently of its RNA-binding activity, could negatively regulate MAVS by promoting its lysosomal degradation. This is RNA-binding protein 47 from Homo sapiens (Human).